The chain runs to 130 residues: Small ribosomal subunit protein uS8 (130 aa).

This sequence belongs to the universal ribosomal protein uS8 family. As to quaternary structure, part of the 30S ribosomal subunit. Contacts proteins S5 and S12.

Its function is as follows. One of the primary rRNA binding proteins, it binds directly to 16S rRNA central domain where it helps coordinate assembly of the platform of the 30S subunit. This is Small ribosomal subunit protein uS8 from Ruegeria pomeroyi (strain ATCC 700808 / DSM 15171 / DSS-3) (Silicibacter pomeroyi).